The following is a 382-amino-acid chain: F-box/kelch-repeat protein At3g16580 (382 aa).

Positions 9 to 55 constitute an F-box domain; it reads WEFSLSLPWELIEEILSRVPPESLLRFKTVSKQWNALFRDKTFINNH. Kelch repeat units follow at residues 150–196 and 334–381; these read KIFA…NIYT and WIYV…AELQ.

The sequence is that of F-box/kelch-repeat protein At3g16580 from Arabidopsis thaliana (Mouse-ear cress).